A 239-amino-acid chain; its full sequence is tRNA (guanine-N(7)-)-methyltransferase (239 aa).

Glu-69, Glu-94, Asp-121, and Asp-144 together coordinate S-adenosyl-L-methionine. Residue Asp-144 is part of the active site. Position 148 (Lys-148) interacts with substrate. An interaction with RNA region spans residues 150–155 (RHNKRR). Residues Asp-180 and 217-220 (TKFE) each bind substrate.

Belongs to the class I-like SAM-binding methyltransferase superfamily. TrmB family. As to quaternary structure, monomer.

The catalysed reaction is guanosine(46) in tRNA + S-adenosyl-L-methionine = N(7)-methylguanosine(46) in tRNA + S-adenosyl-L-homocysteine. It functions in the pathway tRNA modification; N(7)-methylguanine-tRNA biosynthesis. Catalyzes the formation of N(7)-methylguanine at position 46 (m7G46) in tRNA. The protein is tRNA (guanine-N(7)-)-methyltransferase of Escherichia coli O6:H1 (strain CFT073 / ATCC 700928 / UPEC).